The following is a 594-amino-acid chain: Nucleolar protein 56 (594 aa).

Residues K87, K230, and K240 each participate in a glycyl lysine isopeptide (Lys-Gly) (interchain with G-Cter in SUMO2) cross-link. In terms of domain architecture, Nop spans 292–410 (VAPSLSALIG…VEERLSFYET (119 aa)). S314 carries the phosphoserine modification. Omega-N-methylarginine is present on R359. Composition is skewed to low complexity over residues 458 to 469 (ALASSENSSSTP) and 488 to 504 (QEVP…ISFS). A disordered region spans residues 458 to 594 (ALASSENSSS…KKFHKASQED (137 aa)). Phosphoserine is present on residues S466 and S467. T468 is subject to Phosphothreonine. Phosphoserine is present on residues S511, S519, S520, and S537. K540 participates in a covalent cross-link: Glycyl lysine isopeptide (Lys-Gly) (interchain with G-Cter in SUMO2). K561 is subject to N6-acetyllysine. S563 is subject to Phosphoserine. Residue K564 forms a Glycyl lysine isopeptide (Lys-Gly) (interchain with G-Cter in SUMO2) linkage. Phosphoserine is present on residues S569, S570, S579, and S581. Residues 580–594 (SSKKKKKFHKASQED) are compositionally biased toward basic residues.

It belongs to the NOP5/NOP56 family. In terms of assembly, part of a large pre-ribosomal ribonucleoprotein (RNP) complex, that consists of at least 62 ribosomal proteins, 45 nonribosomal proteins and both pre-rRNA and mature rRNA species. Within this complex directly interacts with TCOF1 in an RNA-independent manner. Core component of box C/D small nucleolar ribonucleoprotein (snoRNP) particles; the core proteins SNU13, NOP56, NOP58 and FBL or FBLL1 assemble stepwise onto the snoRNA. Interacts with NOP1 and NOP58. Interacts with NUFIP1, RUVBL1 and RUVBL2; RUVBL1:RUVBL2 seem to bridge the association of NOP56 with NUFIP1. Part of the small subunit (SSU) processome, composed of more than 70 proteins and the RNA chaperone small nucleolar RNA (snoRNA) U3. Interacts with NOP2 and FBL.

It is found in the nucleus. The protein localises to the nucleolus. The protein resides in the cytoplasm. It localises to the nucleoplasm. Involved in the early to middle stages of 60S ribosomal subunit biogenesis. Required for the biogenesis of box C/D snoRNAs such U3, U8 and U14 snoRNAs. Part of the small subunit (SSU) processome, first precursor of the small eukaryotic ribosomal subunit. During the assembly of the SSU processome in the nucleolus, many ribosome biogenesis factors, an RNA chaperone and ribosomal proteins associate with the nascent pre-rRNA and work in concert to generate RNA folding, modifications, rearrangements and cleavage as well as targeted degradation of pre-ribosomal RNA by the RNA exosome. Core component of box C/D small nucleolar ribonucleoprotein (snoRNP) complexes that function in methylation of multiple sites on ribosomal RNAs (rRNAs) and messenger RNAs (mRNAs). This is Nucleolar protein 56 from Homo sapiens (Human).